We begin with the raw amino-acid sequence, 65 residues long: Large ribosomal subunit protein bL35 (65 aa).

This sequence belongs to the bacterial ribosomal protein bL35 family.

This is Large ribosomal subunit protein bL35 from Nitrosomonas eutropha (strain DSM 101675 / C91 / Nm57).